Here is a 246-residue protein sequence, read N- to C-terminus: uncharacterized protein (246 aa).

Disordered stretches follow at residues 29 to 54 (SLETDEPTSSSPSLSSNSDVSQENGS), 93 to 114 (LRRTMSQNSLEYDEEDEKEDKF), and 148 to 246 (PIPP…SVVI). A compositionally biased stretch (low complexity) spans 35–49 (PTSSSPSLSSNSDVS). Residues 172 to 183 (RQQTNNIRTLHV) show a composition bias toward polar residues. Composition is skewed to low complexity over residues 190 to 203 (SSSSGSKTHSPSSS) and 214 to 225 (SKTTKNRSSNSS). The N-linked (GlcNAc...) asparagine glycan is linked to Asn219. The segment covering 235–246 (LTPSPTFESVVI) has biased composition (polar residues).

This is an uncharacterized protein from Caenorhabditis elegans.